A 230-amino-acid polypeptide reads, in one-letter code: Antiholin-like protein LrgB (230 aa).

A run of 7 helical transmembrane segments spans residues M5–F25, G30–V50, G61–Y81, W92–V112, I149–L169, P177–I197, and I209–I229.

It belongs to the CidB/LrgB family. LrgB subfamily.

The protein resides in the cell membrane. Its function is as follows. Inhibits the expression or activity of extracellular murein hydrolases by interacting, possibly with LrgA, with the holin-like protein CidA. The LrgAB and CidA proteins may affect the proton motive force of the membrane. May be involved in programmed cell death (PCD), possibly triggering PCD in response to antibiotics and environmental stresses. This is Antiholin-like protein LrgB from Bacillus cereus (strain Q1).